The chain runs to 87 residues: Large ribosomal subunit protein bL28 (87 aa).

The protein belongs to the bacterial ribosomal protein bL28 family.

The sequence is that of Large ribosomal subunit protein bL28 from Methylacidiphilum infernorum (isolate V4) (Methylokorus infernorum (strain V4)).